Here is a 267-residue protein sequence, read N- to C-terminus: Translation initiation factor 2 subunit alpha (267 aa).

The region spanning 12-83 is the S1 motif domain; it reads GELVVATVKE…RKKQVDVSLK (72 aa).

Belongs to the eIF-2-alpha family. In terms of assembly, heterotrimer composed of an alpha, a beta and a gamma chain.

Functionally, eIF-2 functions in the early steps of protein synthesis by forming a ternary complex with GTP and initiator tRNA. This is Translation initiation factor 2 subunit alpha from Hyperthermus butylicus (strain DSM 5456 / JCM 9403 / PLM1-5).